A 385-amino-acid polypeptide reads, in one-letter code: Trans-enoyl reductase tasC (385 aa).

49-52 (VDTK) is an NADP(+) binding site. 136 to 143 (NSWYTVAW) lines the substrate pocket. NADP(+) contacts are provided by residues 196–199 (SSST), 219–222 (SARN), and 284–285 (LD). 305–309 (GPELM) lines the substrate pocket. Position 374–375 (374–375 (VS)) interacts with NADP(+).

Belongs to the zinc-containing alcohol dehydrogenase family. Monomer.

The catalysed reaction is (2S,4S)-4-hydroxy-4-methylglutamate + 8 malonyl-CoA + 3 S-adenosyl-L-methionine + ATP + 8 NADPH + 11 H(+) = (2S)-3-[(2S)-3,5-dioxo-4-[(2E,4R,6R,8E,10E,12E)-4,6,12-trimethyltetradeca-2,8,10,12-tetraenoyl]pyrrolidin-2-yl]-2-hydroxy-2-methylpropanoate + AMP + 3 S-adenosyl-L-homocysteine + 8 CO2 + diphosphate + 8 NADP(+) + 8 CoA + 6 H2O. It carries out the reaction (2S,4R)-4-hydroxy-4-methylglutamate + 8 malonyl-CoA + 3 S-adenosyl-L-methionine + ATP + 8 NADPH + 11 H(+) = (2R)-3-[(2S)-3,5-dioxo-4-[(2E,4R,6R,8E,10E,12E)-4,6,12-trimethyltetradeca-2,8,10,12-tetraenoyl]pyrrolidin-2-yl]-2-hydroxy-2-methylpropanoate + AMP + 3 S-adenosyl-L-homocysteine + 8 CO2 + diphosphate + 8 NADP(+) + 8 CoA + 6 H2O. Its pathway is secondary metabolite biosynthesis. In terms of biological role, trans-enoyl reductase; part of the gene cluster that mediates the biosynthesis of the tetramic acids Sch210971 and Sch210972, potential anti-HIV fungal natural product that contain a decalin core. The PKS module of tasS together with the enoylreductase tasC catalyze the formation of the polyketide unit which is then conjugated to 4-hydroxyl-4-methyl glutamate (HMG) by the condensation domain of the tasS NRPS module. One unique structural feature of Sch210971 and Sch210972 is the tetramic acid motif proposed to be derived from the non-proteinogenic amino acid HMG, by a Dieckmann-type condensation catalyzed by the reductase domain of tasS. The aldolase tasA catalyzes the aldol condensation of 2 molecules of pyruvic acid to yield the intermediate 4-hydroxyl-4-methyl-2-oxoglutarate (HMOG), which can then be stereoselectively transaminated, may be by tasG, to form HMG. The Diels-Alderase tas3 then uses the Dieckmann product of tasS as substrate and catalyzes the Diels-Alder cycloaddition to form the decalin ring of Sch210971 and Sch210972. This Hapsidospora irregularis protein is Trans-enoyl reductase tasC.